A 1072-amino-acid polypeptide reads, in one-letter code: DNA-directed RNA polymerase subunit beta (1072 aa).

Belongs to the RNA polymerase beta chain family. As to quaternary structure, in plastids the minimal PEP RNA polymerase catalytic core is composed of four subunits: alpha, beta, beta', and beta''. When a (nuclear-encoded) sigma factor is associated with the core the holoenzyme is formed, which can initiate transcription.

It localises to the plastid. It is found in the chloroplast. The catalysed reaction is RNA(n) + a ribonucleoside 5'-triphosphate = RNA(n+1) + diphosphate. DNA-dependent RNA polymerase catalyzes the transcription of DNA into RNA using the four ribonucleoside triphosphates as substrates. This chain is DNA-directed RNA polymerase subunit beta, found in Eucalyptus globulus subsp. globulus (Tasmanian blue gum).